The following is a 135-amino-acid chain: Large ribosomal subunit protein uL16c (135 aa).

It belongs to the universal ribosomal protein uL16 family. In terms of assembly, part of the 50S ribosomal subunit.

The protein localises to the plastid. It localises to the chloroplast. This Daucus carota (Wild carrot) protein is Large ribosomal subunit protein uL16c.